A 418-amino-acid chain; its full sequence is MAP kinase-interacting serine/threonine-protein kinase 1 (418 aa).

Residues 1–23 are disordered; the sequence is MVSSQPVPFDDGGKRRKKKRKTR. A Protein kinase domain is found at 37–321; the sequence is RLTDELLGEG…AFQVLQHPWL (285 aa). ATP-binding positions include 43–51 and Lys-66; that span reads LGEGAYAKV. Asp-158 serves as the catalytic Proton acceptor. The tract at residues 384–418 is disordered; the sequence is PPSKSRLAKRRAQAHARKGGSHPTHSTVTASQGTP. A compositionally biased stretch (basic residues) spans 389–403; that stretch reads RLAKRRAQAHARKGG. Over residues 406-418 the composition is skewed to polar residues; it reads PTHSTVTASQGTP.

The protein belongs to the protein kinase superfamily. CAMK Ser/Thr protein kinase family. Requires Mg(2+) as cofactor.

The enzyme catalyses L-seryl-[protein] + ATP = O-phospho-L-seryl-[protein] + ADP + H(+). It carries out the reaction L-threonyl-[protein] + ATP = O-phospho-L-threonyl-[protein] + ADP + H(+). Functionally, may play a role in the response to environmental stress and cytokines. Appears to regulate translation by phosphorylating EIF4E, thus increasing the affinity of this protein for the 7-methylguanosine-containing mRNA cap. The polypeptide is MAP kinase-interacting serine/threonine-protein kinase 1 (mknk1) (Xenopus laevis (African clawed frog)).